The chain runs to 256 residues: MLNLENKTYVIMGIANKRSIAFGVAKVLDQLGAKLVFTYRKERSRKELEKLLEQLNQPEAHLYQIDVQSDEEVINGFEQIGKDVGNIDGVYHSIAFANMEDLRGRFSETSREGFLLAQDISSYSLTIVAHEAKKLMPEGGSIVATTYLGGEFAVQNYNVMGVAKASLEANVKYLALDLGPDNIRVNAISAGPIRTLSAKGVGGFNTILKEIEERAPLKRNVDQVEVGKTAAYLLSDLSSGVTGENIHVDSGFHAIK.

Residues glycine 13, serine 19–isoleucine 20, arginine 40–serine 44, aspartate 66–valine 67, and isoleucine 94 each bind NADP(+). Alanine 97 serves as a coordination point for substrate. Residues tyrosine 147 and tyrosine 157 each act as proton acceptor in the active site. Residues lysine 164 and isoleucine 193–serine 197 contribute to the NADP(+) site.

This sequence belongs to the short-chain dehydrogenases/reductases (SDR) family. FabI subfamily. In terms of assembly, homotetramer.

It catalyses the reaction a 2,3-saturated acyl-[ACP] + NADP(+) = a (2E)-enoyl-[ACP] + NADPH + H(+). It participates in lipid metabolism; fatty acid biosynthesis. In terms of biological role, catalyzes the reduction of a carbon-carbon double bond in an enoyl moiety that is covalently linked to an acyl carrier protein (ACP). Involved in the elongation cycle of fatty acid which are used in the lipid metabolism. The polypeptide is Enoyl-[acyl-carrier-protein] reductase [NADPH] FabI (fabI) (Staphylococcus aureus (strain MRSA252)).